The primary structure comprises 329 residues: Lipoyl synthase (329 aa).

The segment at 1–23 (MTDLTATPAPAEPAASAYDPTAK) is disordered. Positions 76, 81, 87, 102, 106, 109, and 316 each coordinate [4Fe-4S] cluster. The Radical SAM core domain occupies 87 to 305 (CFGKGTATFM…EEEAYKMGFT (219 aa)).

The protein belongs to the radical SAM superfamily. Lipoyl synthase family. [4Fe-4S] cluster is required as a cofactor.

Its subcellular location is the cytoplasm. The catalysed reaction is [[Fe-S] cluster scaffold protein carrying a second [4Fe-4S](2+) cluster] + N(6)-octanoyl-L-lysyl-[protein] + 2 oxidized [2Fe-2S]-[ferredoxin] + 2 S-adenosyl-L-methionine + 4 H(+) = [[Fe-S] cluster scaffold protein] + N(6)-[(R)-dihydrolipoyl]-L-lysyl-[protein] + 4 Fe(3+) + 2 hydrogen sulfide + 2 5'-deoxyadenosine + 2 L-methionine + 2 reduced [2Fe-2S]-[ferredoxin]. It participates in protein modification; protein lipoylation via endogenous pathway; protein N(6)-(lipoyl)lysine from octanoyl-[acyl-carrier-protein]: step 2/2. In terms of biological role, catalyzes the radical-mediated insertion of two sulfur atoms into the C-6 and C-8 positions of the octanoyl moiety bound to the lipoyl domains of lipoate-dependent enzymes, thereby converting the octanoylated domains into lipoylated derivatives. The polypeptide is Lipoyl synthase (Burkholderia pseudomallei (strain 1106a)).